The primary structure comprises 114 residues: Endoribonuclease MazF2 (114 aa).

It belongs to the PemK/MazF family. As to quaternary structure, probably forms a complex with cognate antitoxin MazE2.

Its function is as follows. Toxic component of a type II toxin-antitoxin (TA) system. Acts as an endoribonuclease on single-strand RNA, cleaving between the second and third bases in the sequences CUCCU and UUCCU. Neutralized by coexpression with cognate antitoxin MazE2. The polypeptide is Endoribonuclease MazF2 (mazF2) (Mycobacterium bovis (strain ATCC BAA-935 / AF2122/97)).